The chain runs to 529 residues: Glycylpeptide N-tetradecanoyltransferase (529 aa).

Residues M1–E10 show a composition bias toward polar residues. A disordered region spans residues M1 to S65. Residues H11–L23 show a composition bias toward basic and acidic residues. Positions E26 to T40 are enriched in polar residues. Residues F118–W121, L252–V254, and S260–T264 each bind tetradecanoyl-CoA. The Proton acceptor; via carboxylate role is filled by V529.

The protein belongs to the NMT family. Monomer.

Its subcellular location is the cytoplasm. It carries out the reaction N-terminal glycyl-[protein] + tetradecanoyl-CoA = N-tetradecanoylglycyl-[protein] + CoA + H(+). Adds a myristoyl group to the N-terminal glycine residue of certain cellular proteins. The sequence is that of Glycylpeptide N-tetradecanoyltransferase from Ajellomyces capsulatus (Darling's disease fungus).